The following is a 253-amino-acid chain: Imidazole glycerol phosphate synthase subunit HisF (253 aa).

Active-site residues include D11 and D130.

The protein belongs to the HisA/HisF family. As to quaternary structure, heterodimer of HisH and HisF.

It localises to the cytoplasm. The catalysed reaction is 5-[(5-phospho-1-deoxy-D-ribulos-1-ylimino)methylamino]-1-(5-phospho-beta-D-ribosyl)imidazole-4-carboxamide + L-glutamine = D-erythro-1-(imidazol-4-yl)glycerol 3-phosphate + 5-amino-1-(5-phospho-beta-D-ribosyl)imidazole-4-carboxamide + L-glutamate + H(+). It functions in the pathway amino-acid biosynthesis; L-histidine biosynthesis; L-histidine from 5-phospho-alpha-D-ribose 1-diphosphate: step 5/9. IGPS catalyzes the conversion of PRFAR and glutamine to IGP, AICAR and glutamate. The HisF subunit catalyzes the cyclization activity that produces IGP and AICAR from PRFAR using the ammonia provided by the HisH subunit. The chain is Imidazole glycerol phosphate synthase subunit HisF from Acidobacterium capsulatum (strain ATCC 51196 / DSM 11244 / BCRC 80197 / JCM 7670 / NBRC 15755 / NCIMB 13165 / 161).